A 236-amino-acid chain; its full sequence is Probable metal transport system ATP-binding protein TC_0697 (236 aa).

One can recognise an ABC transporter domain in the interval 5–236 (LILENVSFRY…FCCNTFGKCS (232 aa)). 39-46 (GPNGGGKT) serves as a coordination point for ATP.

This sequence belongs to the ABC transporter superfamily.

It localises to the cell inner membrane. In terms of biological role, part of an ATP-driven transport system TC_0696/TC_0697/TC_0698 for a metal. Probably responsible for energy coupling to the transport system. This is Probable metal transport system ATP-binding protein TC_0697 from Chlamydia muridarum (strain MoPn / Nigg).